The following is a 499-amino-acid chain: Dual specificity protein kinase CLK2 (499 aa).

A disordered region spans residues 1-65; sequence MPHPRRYHSS…RSSYDDHSSD (65 aa). Positions 8 to 23 are enriched in basic and acidic residues; the sequence is HSSERGSRGSYHEHYQ. Residues 24–33 show a composition bias toward basic residues; it reads SRKHKRRRSR. Ser-34 bears the Phosphoserine; by PKB/AKT1 mark. The span at 47-65 shows a compositional bias: basic and acidic residues; that stretch reads REDSYHVRSRSSYDDHSSD. At Ser-98 the chain carries Phosphoserine; by autocatalysis. Tyr-99 carries the post-translational modification Phosphotyrosine; by autocatalysis. The segment at 102–142 is disordered; it reads HRENSSYRSQRSSRRKHRRRRRRSRTFSRSSSHSSRRAKSV. A compositionally biased stretch (basic residues) spans 112–127; sequence RSSRRKHRRRRRRSRT. Thr-127 is modified (phosphothreonine; by PKB/AKT1). Ser-141 is subject to Phosphoserine; by autocatalysis. Tyr-152 carries the phosphotyrosine modification. The Protein kinase domain maps to 163-479; the sequence is EIVSTLGEGT…GEALQHPFFA (317 aa). ATP-binding positions include 168–176 and Lys-192; that span reads LGEGTFGRV. The active-site Proton acceptor is the Asp-289. Thr-343 carries the post-translational modification Phosphothreonine; by PKB/AKT2.

Belongs to the protein kinase superfamily. CMGC Ser/Thr protein kinase family. Lammer subfamily. In terms of assembly, interacts with RBMX and UBL5. Interacts with AKT1. Autophosphorylates on all three types of residues. Phosphorylation on Ser-34 and Thr-127 by AKT1 is induced by ionizing radiation or insulin. Phosphorylation plays a critical role in cell proliferation following low dose radiation and prevents cell death following high dose radiation. Phosphorylation at Thr-343 by PKB/AKT2 induces its kinase activity which is required for its stability. The phosphorylation status at Ser-141 influences its subnuclear localization; inhibition of phosphorylation at Ser-141 results in accumulation in the nuclear speckle.

It is found in the nucleus. The protein localises to the nucleus speckle. The enzyme catalyses L-seryl-[protein] + ATP = O-phospho-L-seryl-[protein] + ADP + H(+). It carries out the reaction L-threonyl-[protein] + ATP = O-phospho-L-threonyl-[protein] + ADP + H(+). It catalyses the reaction L-tyrosyl-[protein] + ATP = O-phospho-L-tyrosyl-[protein] + ADP + H(+). With respect to regulation, 5,6-dichloro-1-b-D-ribofuranosylbenzimidazole (DRB) inhibits autophosphorylation. TG003 inhibits its kinase activity and affects the regulation of alternative splicing mediated by phosphorylation of SR proteins. Dual specificity kinase acting on both serine/threonine and tyrosine-containing substrates. Phosphorylates serine- and arginine-rich (SR) proteins of the spliceosomal complex. May be a constituent of a network of regulatory mechanisms that enable SR proteins to control RNA splicing and can cause redistribution of SR proteins from speckles to a diffuse nucleoplasmic distribution. Acts as a suppressor of hepatic gluconeogenesis and glucose output by repressing PPARGC1A transcriptional activity on gluconeogenic genes via its phosphorylation. Phosphorylates PPP2R5B thereby stimulating the assembly of PP2A phosphatase with the PPP2R5B-AKT1 complex leading to dephosphorylation of AKT1. Phosphorylates: PTPN1, SRSF1 and SRSF3. Regulates the alternative splicing of tissue factor (F3) pre-mRNA in endothelial cells. Phosphorylates PAGE4 at several serine and threonine residues and this phosphorylation attenuates the ability of PAGE4 to potentiate the transcriptional activator activity of JUN. This chain is Dual specificity protein kinase CLK2 (Clk2), found in Mus musculus (Mouse).